We begin with the raw amino-acid sequence, 815 residues long: Probable inorganic carbon transporter subunit DabA (815 aa).

4 residues coordinate Zn(2+): Cys-334, Asp-336, His-507, and Cys-522.

The protein belongs to the inorganic carbon transporter (TC 9.A.2) DabA family. As to quaternary structure, forms a complex with DabB. Zn(2+) is required as a cofactor.

The protein resides in the cell inner membrane. Part of an energy-coupled inorganic carbon pump. This is Probable inorganic carbon transporter subunit DabA from Ectopseudomonas mendocina (strain ymp) (Pseudomonas mendocina).